Consider the following 3075-residue polypeptide: MVQNTDNNTYNQLIRDINDYDDAGSSGDVAVIGIGLRFPSGSLKESISKPNQLFNELLNGLDGIVTTSERWSDNYFLNGEIASKFAGLLPLDEWKQFDPIFFAINPSNDNVSSIDPQQRFLLKCVWEALEDSGIDPISLRGTNTSTFIGSSTIDYNNLQKSSFETQNNIFGSSTHSVANRIGYCFDFRGENLTIDTACSSSSNAINCGYNSIKSNKSNVSIVGGVNFILDPHISKSFTQLGLLSPTGRCHTFSSDADGYVRSEGVGIVVLKKLKDAIKDSNNIYCVIKGSSSNIDGNFDKLNFYSPSKSSQYENIKLAIKSTNGQINESDIDYCETHGTGTPTGDPIELEGISRVFNKAPATTNNNHKQVLIGSIKSNIGHTEACSGVASLIKCCLMFKNKLFLQNINFKEPNPLINFKEWGLKVVTEPIKFNENKSTVMLINNFGVTGSNVCLILSEFKNNLSRYGNGNGYHKMEIDNNLNEKKKYLIPLSSNSSTSLNNYKSSIIKHSNSNSSPTTTSFKEFVYNQIKFKSTSLIQKSVIIASDWNEFQDESNQIKLNNSDNLISNITVEKKKSPITVMVLCGQGSQYNKMALSLYDNEPIFRESVNRFDKELFKYYGYSVLDKLRSIDDKDLISIHQPILAQPANVIIQVSLYELYKHWGVSADIIIGHSLGEVSSPYCSGMIDFQTLCYLTYHRSVAQNRTTGTGRMLSVNISSDEFINKYQSTTKYKSLEIACYNSPTSIVIAGNEDLLNEITNEFKSNDIFCSMLGSLSSFHTSSQQMIKDEVCSLNISSKQPSIAVFSTVTTNLFNHQTSPFNANYVFDNIIQPVYFTQTITNLYKHIESNDMGNEITFIEVSPHPTLQYYLNQMKSTQSSYFNNGKNITIYSPLNKKKNDYNEFLKTISLLYVNNNFDINFKSQLINDNNNISNTTKLNNLPLYQWDDKEYFKLNSSLEKIKSEGPSINNLGNNTDSPYLSYQTFIDIKKSPFQWLKGHQVSDKFYYPGMGYVHNLLSIYPNQDITISSLEFKSPLVLTEGNNQCLQTIIAPLSKNEFNIKSHYKDQKTNQWILSSLGNFSLTKHNSITSNKLINIQSLKDKCNFTSMSKQDFYETIRIKTNLTYKGLFQGVKQCYIGNNCSLAIVSLNEIYNQKEYNHLINNNNMNTFFNAAILDTCLHGSLVAVTQPVVLDKIEAFKFYSSNIPLLNKNNNNNNSDDDSIKELYVFSDIKPRTNSQTYSVSVKVILPNGTLLVDISNVVCALVSLGSNPDSTIICKPPSNDIYTPYLQLKDSIINKPEQFKHLYSVDEFSVKEEDNQFISNELLLSLFYKHINNRSPSINLESLTTLEYNQFKQLYYNSLANENLFKFIFENLKRYSNILNHDNNHSNIKSKHEELYIRTTKIMAKQLFPLKDDDSITDTPQSLFESGFLDDFYKNSRVVQPLNNLLSEIIVETLKPILNEPIVFRILEAGGGTGSLSLLILEKICKLLNDNSTTSIINIEFTWSDVSASFFAEIKEKFSSFTNHNNLNIIYRVLDLEKPLLDQDLKASYYDFIVMSNVMHVVKKLKPTLNEIHNILTPNGQLLYIEPPYKSFYYDSIFGCFSQWWPSSDSDIELRPDRCCMKQEKWINLLNQCNYRDTIMSGNDNLLFLIQTRKPTINEIISEQSISLDQLNSFNNIILFCNNNNSNDKNRNSCSSSILDLIRSNQELKHKIININNYNEFQSWITNNQNKDDCNKTLIIFLKSIESTMNTFNFKEITFEYIQINQLILKLELSNNFKHLLLSLNSSTDNYLSSSIIGAARYFVEFPQLDLYILNYDNVSIENNQQLSLINYLINPNNNIQKEFTINNNKVYYERYCRRSNNIKSIFQSESFETNKDNLYIQLNSNLEYQLYSKKAELNSNEVEIEVKANGINYKDYLMYIGMIGTDLDIKYGKEYEIENGIGIDNPNIGNDFSGIITRLGSNVKKFKVGDQVCGIGSKTNSSHVIIDFNFIYYKPLNYNHSVSASIPSIYITSLHSIYSIGNLKSNESILIHSAAGGVGISSLDLLKSKQHQGYIFLTVGSKDKEEYLTKKYGSLITAIYSSRNKDYVYEIKNKLIELGVVEQNQQGVDIILNTLSSEYMDSNFQCLNMSGCIVDLSITHLTPNDYMTNNHYKFNMGYNNVEVVDFPSKLIKSYLKKIIKMINSNELELSVPIIEYSNNQFKDAIEYINQRKHIGKIIVNHNQDEFNRVYNNYQSNNNQIIMKHSYDISKLNIGKNILLTGQTGIVLEILKYLVKYSNHSIENIIILSKSKLKWELELLINQSKFKKDNNIKFHFNQIDIEDSNKVNQVLNQLELNENITNIDSIIHFAFMNDIGDVQQVDMNRLNNAHGAKTIGAINLHNQSINRSWNIKQFIMASSIVSIFGSDQQCCYVSACSVIDSLSKYRHSIGLPSLAINLGAISSTGFISRNNAIETMFKSSILKLFSPQLVISSLDLFIQNQHQYPNYCLSDFNFEVLPSTLTNHFLTKFDYQINISKKLSQIKSSSSGNGGDNNEIIRSTILNKICELLSIDESKINEDLQLTQYGMDSLVIVQLKNFIDNQIGHNLITIQQLQNNKINQSIEIIKSAHINNNKNKNNNNNNNLVKKEQQSLDEFIKNEIKLNESIISRPYSIKNILNNNNNKSIFLTGSTGFLGAYLLTELIKMDNISKIYCLIRNNSKLTNPIDVIINNLKKHQLIDMNKESPNQRLTKIINRTGNMSNDKLNSNIENSENNNKQISEDQLIKIIPMIGDVSKDKFGLTEQDYLKLSNECDIIINSAADLNLKSNYEESKTVNVDSINQVIKLSVSNNSSQKLIVHFSSIAVFINHQLKDGETFEETNILPNFYTTPIGYIQCKVISEKLLTNAAESRGIPSIIIRPPDIFSNPITGIGHSNDFVSLLLKVSKEIGYYPNIHKPIFTTPITTIAKTTIDLIFNENSWNQNKSKPISIYSLNGNSIEMKSIYEFLENKFNCKEIDYQEWIKLVSKSNGKSSKRYSAFHIHDNQNLLISTFKINSLFKMSNSTKELLISIGSYNHQDWEINESIILNNINSNSN.

Residues 26–458 enclose the Ketosynthase family 3 (KS3) domain; the sequence is SGDVAVIGIG…GSNVCLILSE (433 aa). Residues cysteine 198, histidine 337, and histidine 381 each act as for beta-ketoacyl synthase activity in the active site. The interval 663 to 696 is acyl/malonyl transferase; that stretch reads GVSADIIIGHSLGEVSSPYCSGMIDFQTLCYLTY. The active-site For acyl/malonyl transferase activity is the serine 673. Residues 963 to 1085 form an N-terminal hotdog fold region; the sequence is GPSINNLGNN…GNFSLTKHNS (123 aa). In terms of domain architecture, PKS/mFAS DH spans 963 to 1269; sequence GPSINNLGNN…CALVSLGSNP (307 aa). Catalysis depends on histidine 997, which acts as the Proton acceptor; for dehydratase activity. Positions 1102-1269 are C-terminal hotdog fold; that stretch reads NFTSMSKQDF…CALVSLGSNP (168 aa). Aspartate 1174 serves as the catalytic Proton donor; for dehydratase activity. The region spanning 2533-2610 is the Carrier domain; sequence DNNEIIRSTI…QSIEIIKSAH (78 aa). Serine 2570 bears the O-(pantetheine 4'-phosphoryl)serine mark.

It depends on pantetheine 4'-phosphate as a cofactor.

In terms of biological role, probable polyketide synthase. May be involved in the process of cell migration. This is Probable polyketide synthase 30 (pks30) from Dictyostelium discoideum (Social amoeba).